Reading from the N-terminus, the 122-residue chain is Large ribosomal subunit protein uL14 (122 aa).

The protein belongs to the universal ribosomal protein uL14 family. In terms of assembly, part of the 50S ribosomal subunit. Forms a cluster with proteins L3 and L19. In the 70S ribosome, L14 and L19 interact and together make contacts with the 16S rRNA in bridges B5 and B8.

Functionally, binds to 23S rRNA. Forms part of two intersubunit bridges in the 70S ribosome. This chain is Large ribosomal subunit protein uL14, found in Paracoccus denitrificans (strain Pd 1222).